Reading from the N-terminus, the 2318-residue chain is Neurogenic locus notch homolog protein 3 (2318 aa).

The span at 1 to 14 (MGLGARGRRRRRRL) shows a compositional bias: basic residues. A disordered region spans residues 1-20 (MGLGARGRRRRRRLMALPPP). The signal sequence occupies residues 1-39 (MGLGARGRRRRRRLMALPPPPPPMRALPLLLLLAGLGAA). 3 consecutive EGF-like domains span residues 40 to 78 (APPCLDGSPCANGGRCTHQQPSLEAACLCLPGWVGERCQ), 79 to 119 (LEDP…PDCS), and 120 to 157 (QPDPCVSRPCVHGAPCSVGPDGRFACACPPGYQGQSCQ). Over 40–1643 (APPCLDGSPC…PLEAPEQSVP (1604 aa)) the chain is Extracellular. Disulfide bonds link C43-C55, C49-C66, C68-C77, C83-C94, C88-C107, C109-C118, C124-C135, C129-C145, C147-C156, C163-C175, C169-C184, C186-C195, C202-C213, C207-C223, C225-C234, C241-C252, C246-C261, C263-C272, C279-C292, C286-C301, C303-C312, C319-C330, C324-C339, C341-C350, C356-C367, C361-C378, C380-C389, C396-C409, C403-C418, C420-C429, C436-C447, C441-C456, C458-C467, C474-C485, C479-C494, C496-C505, C512-C523, C517-C532, C534-C543, C550-C560, C555-C569, C571-C580, C587-C598, C592-C607, C609-C618, C625-C635, C630-C644, C646-C655, C662-C673, C667-C682, C684-C693, C700-C710, C705-C719, C721-C730, C739-C750, C744-C759, C761-C770, C776-C787, C781-C797, C799-C808, C815-C827, C821-C836, C838-C847, C854-C865, C859-C874, C876-C885, C892-C902, C897-C911, C913-C922, C929-C940, C934-C949, C951-C960, C967-C978, C972-C987, C989-C998, C1005-C1016, C1010-C1023, C1025-C1034, C1041-C1062, C1056-C1071, C1073-C1082, C1089-C1100, C1094-C1109, C1111-C1120, C1127-C1138, C1132-C1147, C1149-C1158, C1165-C1183, C1177-C1192, C1194-C1203, C1210-C1223, C1215-C1233, C1235-C1244, C1251-C1262, C1256-C1276, C1278-C1287, C1294-C1305, C1299-C1314, and C1316-C1325. The 38-residue stretch at 159–196 (DIDECRSGTTCRHGGTCLNTPGSFRCQCPLGYTGLLCE) folds into the EGF-like 4; calcium-binding domain. One can recognise an EGF-like 5 domain in the interval 198-235 (PVVPCAPSPCRNGGTCRQSSDVTYDCACLPGFEGQNCE). One can recognise an EGF-like 6; calcium-binding domain in the interval 237–273 (NVDDCPGHRCLNGGTCVDGVNTYNCQCPPEWTGQFCT). One can recognise an EGF-like 7 domain in the interval 275 to 313 (DVDECQLQPNACHNGGTCFNLLGGHSCVCVNGWTGESCS). In terms of domain architecture, EGF-like 8; calcium-binding spans 315–351 (NIDDCATAVCFHGATCHDRVASFYCACPMGKTGLLCH). Residues 352–390 (LDDACVSNPCHEDAICDTNPVSGRAICTCPPGFTGGACD) enclose the EGF-like 9 domain. Residues 392–430 (DVDECSIGANPCEHLGRCVNTQGSFLCQCGRGYTGPRCE) enclose the EGF-like 10; calcium-binding domain. The 37-residue stretch at 432-468 (DVNECLSGPCRNQATCLDRIGQFTCICMAGFTGTYCE) folds into the EGF-like 11; calcium-binding domain. The EGF-like 12; calcium-binding domain occupies 470–506 (DIDECQSSPCVNGGVCKDRVNGFSCTCPSGFSGSMCQ). One can recognise an EGF-like 13; calcium-binding domain in the interval 508-544 (DVDECASTPCRNGAKCVDQPDGYECRCAEGFEGTLCE). The region spanning 546–581 (NVDDCSPDPCHHGRCVDGIASFSCACAPGYTGIRCE) is the EGF-like 14; calcium-binding domain. The region spanning 583–619 (QVDECRSQPCRYGGKCLDLVDKYLCRCPPGTTGVNCE) is the EGF-like 15; calcium-binding domain. The EGF-like 16; calcium-binding domain occupies 621–656 (NIDDCASNPCTFGVCRDGINRYDCVCQPGFTGPLCN). Positions 658–694 (EINECASSPCGEGGSCVDGENGFHCLCPPGSLPPLCL) constitute an EGF-like 17; calcium-binding domain. 3 EGF-like domains span residues 696-731 (ANHPCAHKPCSHGVCHDAPGGFRCVCEPGWSGPRCS), 735-771 (APDACESQPCQAGGTCTSDGIGFRCTCAPGFQGHQCE), and 772-809 (VLSPCTPSLCEHGGHCESDPDRLTVCSCPPGWQGPRCQ). Residues 811–848 (DVDECAGASPCGPHGTCTNLPGNFRCICHRGYTGPFCD) form the EGF-like 21; calcium-binding domain. In terms of domain architecture, EGF-like 22; calcium-binding spans 850-886 (DIDDCDPNPCLHGGSCQDGVGSFSCSCLDGFAGPRCA). The region spanning 888-923 (DVDECLSSPCGPGTCTDHVASFTCACPPGYGGFHCE) is the EGF-like 23; calcium-binding domain. 5 EGF-like domains span residues 925 to 961 (DLPDCSPSSCFNGGTCVDGVSSFSCLCRPGYTGTHCQ), 963 to 999 (EADPCFSRPCLHGGICNPTHPGFECTCREGFTGSQCQ), 1001 to 1035 (PVDWCSQAPCQNGGRCVQTGAYCICPPGWSGRLCD), 1037 to 1083 (QSLP…SHCE), and 1085 to 1121 (EVDPCTAQPCQHGGTCRGYMGGYVCECPAGYAGDSCE). Positions 1123–1159 (NIDECASQPCQNGGSCIDLVARYLCSCPPGTLGVLCE) constitute an EGF-like 29; calcium-binding domain. The 44-residue stretch at 1161 to 1204 (NEDDCDLGPSLDSGVQCLHNGTCVDLVGGFRCNCPPGYTGLHCE) folds into the EGF-like 30; calcium-binding domain. An N-linked (GlcNAc...) asparagine glycan is attached at N1180. EGF-like domains lie at 1206 to 1245 (DINECRPGACHAAHTRDCLQDPGGHFRCVCHPGFTGPRCQ), 1247 to 1288 (ALSP…LRCE), 1290 to 1326 (VARSCRELQCPVGIPCQQTARGPRCACPPGLSGPSCR), and 1336 to 1374 (TNASCASAPCLHGGSCLPVQSVPFFRCVCAPGWGGPRCE). N1337 is a glycosylation site (N-linked (GlcNAc...) asparagine). 12 cysteine pairs are disulfide-bonded: C1340-C1351, C1345-C1362, C1364-C1373, C1388-C1411, C1393-C1406, C1402-C1418, C1429-C1452, C1434-C1447, C1443-C1459, C1468-C1494, C1476-C1489, and C1485-C1501. LNR repeat units lie at residues 1388–1428 (CPRA…PWRQ), 1429–1466 (CEALQCWRLFNNSRCDPACSSPACLYDNFDCYSGGRDR), and 1468–1506 (CNPVYEKYCADHFADGRCDQGCNTEECGWDGLDCASEVP). N1439 carries N-linked (GlcNAc...) asparagine glycosylation. A helical transmembrane segment spans residues 1644–1664 (LLPLLVAGAVFLLIIFILGVM). Topologically, residues 1665 to 2318 (VARRKREHST…EVTPKRQVMA (654 aa)) are cytoplasmic. 5 ANK repeats span residues 1839–1868 (TGETALHLAARYARADAAKRLLDAGADTNA), 1872–1902 (SGRTPLHTAVTADAQGVFQILIRNRSTDLDA), 1906–1935 (DGSTALILAARLAVEGMVEELIASHADVNA), 1939–1968 (LGKSALHWAAAVNNVEATLALLKNGANKDM), and 1972–2001 (KEETPLFLAAREGSYEAAKLLLDHLANREI). 2 disordered regions span residues 2025–2045 (LDQPSGPRSPSGPHGLGPLLC) and 2058–2126 (QSGT…PLEG). The span at 2028–2045 (PSGPRSPSGPHGLGPLLC) shows a compositional bias: low complexity. At R2174 the chain carries Omega-N-methylarginine. Over residues 2184–2193 (SFLLPLAPGP) the composition is skewed to low complexity. Residues 2184–2318 (SFLLPLAPGP…EVTPKRQVMA (135 aa)) are disordered. The segment at 2242–2261 (HPYLTPSPESPEHWASPSPP) is PEST-like. Low complexity predominate over residues 2262–2282 (SLSDWSDSTPSPATATNATAS). Over residues 2296–2305 (SLPQSQTQLG) the composition is skewed to polar residues.

The protein belongs to the NOTCH family. Interacts with PSMA1. Heterodimer of a C-terminal fragment N(TM) and a N-terminal fragment N(EC) which are probably linked by disulfide bonds. Interacts with MAML1, MAML2 and MAML3 which act as transcriptional coactivators for NOTCH3. Interacts with HIF1AN. In terms of processing, synthesized in the endoplasmic reticulum as an inactive form which is proteolytically cleaved by a furin-like convertase in the trans-Golgi network before it reaches the plasma membrane to yield an active, ligand-accessible form. Cleavage results in a C-terminal fragment N(TM) and a N-terminal fragment N(EC). Following ligand binding, it is cleaved by TNF-alpha converting enzyme (TACE) to yield a membrane-associated intermediate fragment called notch extracellular truncation (NEXT). This fragment is then cleaved by presenilin dependent gamma-secretase to release a notch-derived peptide containing the intracellular domain (NICD) from the membrane. Post-translationally, phosphorylated. Hydroxylated by HIF1AN. Proliferating neuroepithelium.

It localises to the cell membrane. Its subcellular location is the nucleus. In terms of biological role, functions as a receptor for membrane-bound ligands Jagged1, Jagged2 and Delta1 to regulate cell-fate determination. Upon ligand activation through the released notch intracellular domain (NICD) it forms a transcriptional activator complex with RBPJ/RBPSUH and activates genes of the enhancer of split locus. Affects the implementation of differentiation, proliferation and apoptotic programs. May play a role during CNS development. The protein is Neurogenic locus notch homolog protein 3 (Notch3) of Mus musculus (Mouse).